Reading from the N-terminus, the 101-residue chain is NADH-quinone oxidoreductase subunit K (101 aa).

Helical transmembrane passes span 4-24 (LAHF…GIFL), 30-50 (IVLL…FVAF), and 61-81 (VFVF…LAIL).

Belongs to the complex I subunit 4L family. As to quaternary structure, NDH-1 is composed of 14 different subunits. Subunits NuoA, H, J, K, L, M, N constitute the membrane sector of the complex.

It localises to the cell inner membrane. The enzyme catalyses a quinone + NADH + 5 H(+)(in) = a quinol + NAD(+) + 4 H(+)(out). NDH-1 shuttles electrons from NADH, via FMN and iron-sulfur (Fe-S) centers, to quinones in the respiratory chain. The immediate electron acceptor for the enzyme in this species is believed to be ubiquinone. Couples the redox reaction to proton translocation (for every two electrons transferred, four hydrogen ions are translocated across the cytoplasmic membrane), and thus conserves the redox energy in a proton gradient. The polypeptide is NADH-quinone oxidoreductase subunit K (Cupriavidus necator (strain ATCC 17699 / DSM 428 / KCTC 22496 / NCIMB 10442 / H16 / Stanier 337) (Ralstonia eutropha)).